We begin with the raw amino-acid sequence, 198 residues long: tRNA (cytidine(56)-2'-O)-methyltransferase (198 aa).

Residues L81, 110–114, and 128–135 contribute to the S-adenosyl-L-methionine site; these read GAEKV and IGNQPHSE. Residues 178–198 are disordered; it reads DAKQAEASGEGASRKNGQLPS.

It belongs to the aTrm56 family. As to quaternary structure, homodimer.

The protein localises to the cytoplasm. The enzyme catalyses cytidine(56) in tRNA + S-adenosyl-L-methionine = 2'-O-methylcytidine(56) in tRNA + S-adenosyl-L-homocysteine + H(+). Specifically catalyzes the AdoMet-dependent 2'-O-ribose methylation of cytidine at position 56 in tRNAs. The protein is tRNA (cytidine(56)-2'-O)-methyltransferase of Pyrococcus abyssi (strain GE5 / Orsay).